A 431-amino-acid chain; its full sequence is COBRA-like protein 4 (431 aa).

The N-terminal stretch at Met1–Ala20 is a signal peptide. 8 N-linked (GlcNAc...) asparagine glycosylation sites follow: Asn29, Asn154, Asn162, Asn201, Asn226, Asn306, Asn321, and Asn340. Residue Asn414 is the site of GPI-anchor amidated asparagine attachment. Positions Phe415–Trp431 are cleaved as a propeptide — removed in mature form.

The protein belongs to the COBRA family. Expressed in roots, stems, leaves, flowers and siliques.

It is found in the cell membrane. The chain is COBRA-like protein 4 (COBL4) from Arabidopsis thaliana (Mouse-ear cress).